Reading from the N-terminus, the 276-residue chain is MPELPEVEVTRRGIEPYVSGRKVERVDVRTPALRWPIPADLAKTLRGHVVRKVERRGKYLLFEIDAGWFIVHLGMTGTLRVLRHVPHPPAAAKHDHIDWIFDEFILRYRDPRRFGAVLWHPREAGDVLEHPLLASLGVEPFSPAFSGALMHRLTRGRKVSVKQALLAGEIVVGVGNIYASESLFRAGIRPTTAAGRVSLVRYELLADAVRVTLAAAIEKGGSTLRDFVGSNGESGYFQLDYFVYDRAGLPCRVCGTPIKQIVQGQRSTYFCPTCQR.

Proline 2 serves as the catalytic Schiff-base intermediate with DNA. Glutamate 3 acts as the Proton donor in catalysis. The active-site Proton donor; for beta-elimination activity is lysine 58. The DNA site is built by histidine 94, arginine 112, and arginine 157. The FPG-type zinc finger occupies 242-276 (FVYDRAGLPCRVCGTPIKQIVQGQRSTYFCPTCQR). The Proton donor; for delta-elimination activity role is filled by arginine 266.

It belongs to the FPG family. As to quaternary structure, monomer. Zn(2+) serves as cofactor.

It catalyses the reaction Hydrolysis of DNA containing ring-opened 7-methylguanine residues, releasing 2,6-diamino-4-hydroxy-5-(N-methyl)formamidopyrimidine.. It carries out the reaction 2'-deoxyribonucleotide-(2'-deoxyribose 5'-phosphate)-2'-deoxyribonucleotide-DNA = a 3'-end 2'-deoxyribonucleotide-(2,3-dehydro-2,3-deoxyribose 5'-phosphate)-DNA + a 5'-end 5'-phospho-2'-deoxyribonucleoside-DNA + H(+). Its function is as follows. Involved in base excision repair of DNA damaged by oxidation or by mutagenic agents. Acts as a DNA glycosylase that recognizes and removes damaged bases. Has a preference for oxidized purines, such as 7,8-dihydro-8-oxoguanine (8-oxoG). Has AP (apurinic/apyrimidinic) lyase activity and introduces nicks in the DNA strand. Cleaves the DNA backbone by beta-delta elimination to generate a single-strand break at the site of the removed base with both 3'- and 5'-phosphates. This is Formamidopyrimidine-DNA glycosylase from Paraburkholderia phytofirmans (strain DSM 17436 / LMG 22146 / PsJN) (Burkholderia phytofirmans).